The following is a 193-amino-acid chain: Ribonuclease HII (193 aa).

One can recognise an RNase H type-2 domain in the interval 15-193 (YIVAGVDEAG…SYHRKSFKFC (179 aa)). Positions 21, 22, and 112 each coordinate a divalent metal cation.

This sequence belongs to the RNase HII family. Mn(2+) serves as cofactor. The cofactor is Mg(2+).

Its subcellular location is the cytoplasm. It catalyses the reaction Endonucleolytic cleavage to 5'-phosphomonoester.. In terms of biological role, endonuclease that specifically degrades the RNA of RNA-DNA hybrids. The chain is Ribonuclease HII from Rickettsia typhi (strain ATCC VR-144 / Wilmington).